A 247-amino-acid chain; its full sequence is UDP-2,3-diacylglucosamine hydrolase (247 aa).

Residues D8, H10, D41, N79, and H114 each coordinate Mn(2+). Position 79–80 (79–80 (NR)) interacts with substrate. Substrate-binding residues include D122, S160, D171, Q174, and H202. The Mn(2+) site is built by H202 and H204.

This sequence belongs to the LpxH family. The cofactor is Mn(2+).

The protein localises to the cell inner membrane. It catalyses the reaction UDP-2-N,3-O-bis[(3R)-3-hydroxytetradecanoyl]-alpha-D-glucosamine + H2O = 2-N,3-O-bis[(3R)-3-hydroxytetradecanoyl]-alpha-D-glucosaminyl 1-phosphate + UMP + 2 H(+). The protein operates within glycolipid biosynthesis; lipid IV(A) biosynthesis; lipid IV(A) from (3R)-3-hydroxytetradecanoyl-[acyl-carrier-protein] and UDP-N-acetyl-alpha-D-glucosamine: step 4/6. In terms of biological role, hydrolyzes the pyrophosphate bond of UDP-2,3-diacylglucosamine to yield 2,3-diacylglucosamine 1-phosphate (lipid X) and UMP by catalyzing the attack of water at the alpha-P atom. Involved in the biosynthesis of lipid A, a phosphorylated glycolipid that anchors the lipopolysaccharide to the outer membrane of the cell. This is UDP-2,3-diacylglucosamine hydrolase from Xanthomonas campestris pv. campestris (strain B100).